The sequence spans 225 residues: Octanoyltransferase (225 aa).

One can recognise a BPL/LPL catalytic domain in the interval 29–210 (PDTDDEIWVV…RLIAHLDGAT (182 aa)). Substrate contacts are provided by residues 69–76 (RGGQITYH), 141–143 (ALG), and 154–156 (GLS). Cys-172 functions as the Acyl-thioester intermediate in the catalytic mechanism.

Belongs to the LipB family.

Its subcellular location is the cytoplasm. The enzyme catalyses octanoyl-[ACP] + L-lysyl-[protein] = N(6)-octanoyl-L-lysyl-[protein] + holo-[ACP] + H(+). The protein operates within protein modification; protein lipoylation via endogenous pathway; protein N(6)-(lipoyl)lysine from octanoyl-[acyl-carrier-protein]: step 1/2. Its function is as follows. Catalyzes the transfer of endogenously produced octanoic acid from octanoyl-acyl-carrier-protein onto the lipoyl domains of lipoate-dependent enzymes. Lipoyl-ACP can also act as a substrate although octanoyl-ACP is likely to be the physiological substrate. The protein is Octanoyltransferase of Burkholderia pseudomallei (strain K96243).